The primary structure comprises 116 residues: Large ribosomal subunit protein bL19 (116 aa).

Belongs to the bacterial ribosomal protein bL19 family.

This protein is located at the 30S-50S ribosomal subunit interface and may play a role in the structure and function of the aminoacyl-tRNA binding site. The protein is Large ribosomal subunit protein bL19 of Mannheimia succiniciproducens (strain KCTC 0769BP / MBEL55E).